The sequence spans 1221 residues: DNA replication helicase (1221 aa).

The Nuclear localization signal motif lies at 692-701 (PKCKCYKKIK). 917–924 (GEPGSGKS) is an ATP binding site. Residues 967–981 (INELKQCSESYFKKH) constitute a DNA-binding region (H-T-H motif).

In terms of assembly, interacts with IE1 and LEF-3.

It is found in the host nucleus. The enzyme catalyses ATP + H2O = ADP + phosphate + H(+). Essential for initiation of viral DNA replication, it may contribute to other functions such as controlling the switch to the late phase and leading to the inhibition of host protein synthesis. Required for late and very late gene expression. The polypeptide is DNA replication helicase (HELI) (Lepidoptera (butterflies and moths)).